A 257-amino-acid polypeptide reads, in one-letter code: 4-hydroxy-tetrahydrodipicolinate reductase (257 aa).

Residues glycine 11–methionine 16 and glutamate 37 contribute to the NAD(+) site. Arginine 38 lines the NADP(+) pocket. NAD(+) is bound by residues glycine 86 to threonine 88 and serine 110 to tyrosine 113. Histidine 144 functions as the Proton donor/acceptor in the catalytic mechanism. Histidine 145 serves as a coordination point for (S)-2,3,4,5-tetrahydrodipicolinate. Lysine 148 (proton donor) is an active-site residue. Glycine 154–threonine 155 lines the (S)-2,3,4,5-tetrahydrodipicolinate pocket.

It belongs to the DapB family.

The protein resides in the cytoplasm. The enzyme catalyses (S)-2,3,4,5-tetrahydrodipicolinate + NAD(+) + H2O = (2S,4S)-4-hydroxy-2,3,4,5-tetrahydrodipicolinate + NADH + H(+). The catalysed reaction is (S)-2,3,4,5-tetrahydrodipicolinate + NADP(+) + H2O = (2S,4S)-4-hydroxy-2,3,4,5-tetrahydrodipicolinate + NADPH + H(+). It functions in the pathway amino-acid biosynthesis; L-lysine biosynthesis via DAP pathway; (S)-tetrahydrodipicolinate from L-aspartate: step 4/4. Functionally, catalyzes the conversion of 4-hydroxy-tetrahydrodipicolinate (HTPA) to tetrahydrodipicolinate. This chain is 4-hydroxy-tetrahydrodipicolinate reductase, found in Caulobacter vibrioides (strain ATCC 19089 / CIP 103742 / CB 15) (Caulobacter crescentus).